We begin with the raw amino-acid sequence, 562 residues long: uncharacterized protein (562 aa).

The next 5 helical transmembrane spans lie at 4–26 (VRWI…GTML), 33–55 (GFAI…LGTF), 59–78 (ALLR…YKSG), 90–112 (LAQV…AFAF), and 159–181 (IAAG…VPFA). 2 RCK C-terminal domains span residues 207-287 (PKTE…IIGT) and 295-375 (LKAI…QVGQ). Helical transmembrane passes span 385–402 (IAFL…GLVS), 406–428 (GGIA…CGWL), 449–471 (LGLG…VAIQ), 476–498 (LLVG…FAYH), 505–524 (VITC…VTGA), and 539–561 (VPYA…CTFV).

Belongs to the AAE transporter (TC 2.A.81) family.

It is found in the cell membrane. This is an uncharacterized protein from Bradyrhizobium diazoefficiens (strain JCM 10833 / BCRC 13528 / IAM 13628 / NBRC 14792 / USDA 110).